Consider the following 423-residue polypeptide: COP9 signalosome complex subunit 3 (423 aa).

Ala2 is subject to N-acetylalanine. The PCI domain maps to 197–365 (NFERALYFYE…GMVSFHDNPE (169 aa)). The tract at residues 402–423 (QFVQKSMGSQEDDSGNKPSSYS) is disordered. Ser407, Ser410, and Ser423 each carry phosphoserine.

It belongs to the CSN3 family. In terms of assembly, component of the CSN complex, composed of COPS1/GPS1, COPS2, COPS3, COPS4, COPS5, COPS6, COPS7 (COPS7A or COPS7B), COPS8 and COPS9 isoform 1. In the complex, it probably interacts directly with COPS1, COPS4, COPS8 and COPS9 isoform 1. Interacts with CK2 and PKD. Interacts with the translation initiation factor EIF3S6 and IKBKG. Interacts with ERCC6. Widely expressed. Expressed at high level in heart and skeletal muscle.

Its subcellular location is the cytoplasm. The protein localises to the nucleus. In terms of biological role, component of the COP9 signalosome complex (CSN), a complex involved in various cellular and developmental processes. The CSN complex is an essential regulator of the ubiquitin (Ubl) conjugation pathway by mediating the deneddylation of the cullin subunits of SCF-type E3 ligase complexes, leading to decrease the Ubl ligase activity of SCF-type complexes such as SCF, CSA or DDB2. The complex is also involved in phosphorylation of p53/TP53, c-jun/JUN, IkappaBalpha/NFKBIA, ITPK1 and IRF8/ICSBP, possibly via its association with CK2 and PKD kinases. CSN-dependent phosphorylation of TP53 and JUN promotes and protects degradation by the Ubl system, respectively. This is COP9 signalosome complex subunit 3 (COPS3) from Homo sapiens (Human).